A 197-amino-acid chain; its full sequence is Imidazoleglycerol-phosphate dehydratase (197 aa).

The protein belongs to the imidazoleglycerol-phosphate dehydratase family.

It is found in the cytoplasm. The catalysed reaction is D-erythro-1-(imidazol-4-yl)glycerol 3-phosphate = 3-(imidazol-4-yl)-2-oxopropyl phosphate + H2O. Its pathway is amino-acid biosynthesis; L-histidine biosynthesis; L-histidine from 5-phospho-alpha-D-ribose 1-diphosphate: step 6/9. In Azorhizobium caulinodans (strain ATCC 43989 / DSM 5975 / JCM 20966 / LMG 6465 / NBRC 14845 / NCIMB 13405 / ORS 571), this protein is Imidazoleglycerol-phosphate dehydratase.